The chain runs to 316 residues: DNA-directed RNA polymerase subunit alpha (316 aa).

Residues 1–233 (MCMSQFPIEF…HWFNPLQTLE (233 aa)) form an alpha N-terminal domain (alpha-NTD) region. The segment at 245–316 (MAQLSNMLIE…LHCQLKKYVD (72 aa)) is alpha C-terminal domain (alpha-CTD).

The protein belongs to the RNA polymerase alpha chain family. In plastids the minimal PEP RNA polymerase catalytic core is composed of four subunits: alpha, beta, beta', and beta''. When a (nuclear-encoded) sigma factor is associated with the core the holoenzyme is formed, which can initiate transcription.

It localises to the plastid. It is found in the chloroplast. The enzyme catalyses RNA(n) + a ribonucleoside 5'-triphosphate = RNA(n+1) + diphosphate. DNA-dependent RNA polymerase catalyzes the transcription of DNA into RNA using the four ribonucleoside triphosphates as substrates. This Cyanidioschyzon merolae (strain NIES-3377 / 10D) (Unicellular red alga) protein is DNA-directed RNA polymerase subunit alpha.